Here is a 315-residue protein sequence, read N- to C-terminus: Ribonuclease Z (315 aa).

Histidine 61, histidine 63, aspartate 65, histidine 66, histidine 151, aspartate 219, and histidine 278 together coordinate Zn(2+). Aspartate 65 functions as the Proton acceptor in the catalytic mechanism.

The protein belongs to the RNase Z family. As to quaternary structure, homodimer. Requires Zn(2+) as cofactor.

It carries out the reaction Endonucleolytic cleavage of RNA, removing extra 3' nucleotides from tRNA precursor, generating 3' termini of tRNAs. A 3'-hydroxy group is left at the tRNA terminus and a 5'-phosphoryl group is left at the trailer molecule.. In terms of biological role, zinc phosphodiesterase, which displays some tRNA 3'-processing endonuclease activity. Probably involved in tRNA maturation, by removing a 3'-trailer from precursor tRNA. The protein is Ribonuclease Z of Clostridium botulinum (strain Alaska E43 / Type E3).